The sequence spans 417 residues: Acetate kinase (417 aa).

Asn9 is a Mg(2+) binding site. Lys16 is an ATP binding site. Arg90 is a binding site for substrate. Asp147 functions as the Proton donor/acceptor in the catalytic mechanism. ATP is bound by residues 207 to 211, 282 to 284, and 330 to 334; these read HIGNG, DLR, and GIGEN. Glu384 is a Mg(2+) binding site.

It belongs to the acetokinase family. Homodimer. Mg(2+) serves as cofactor. It depends on Mn(2+) as a cofactor.

The protein localises to the cytoplasm. The catalysed reaction is acetate + ATP = acetyl phosphate + ADP. Its pathway is metabolic intermediate biosynthesis; acetyl-CoA biosynthesis; acetyl-CoA from acetate: step 1/2. Its function is as follows. Catalyzes the formation of acetyl phosphate from acetate and ATP. Can also catalyze the reverse reaction. In Staphylococcus epidermidis (strain ATCC 35984 / DSM 28319 / BCRC 17069 / CCUG 31568 / BM 3577 / RP62A), this protein is Acetate kinase.